A 234-amino-acid polypeptide reads, in one-letter code: MEFSPPLQRATLIQRYKRFLADVITPDGRELTLHCPNTGAMTGCATPGDTVWYSTSDNTKRKYPHTWELTQSQSGAFICVNTLWANRLTKEAILNESISELSGYSSLKSEVKYGAEHSRIDFMLQADSRPDCYIEVKSVTLAENEQGYFPDAVTERGQKHLRELMSVAAEGQRAVIFFAVLHSAITRFSPARHIDEKYAQLLSEAQQRGVEILAYKAELSAEGMALKKSLPVTL.

The segment at residues 201–220 is a DNA-binding region (H-T-H motif); it reads LLSEAQQRGVEILAYKAELS.

The protein belongs to the SfsA family.

In terms of biological role, binds to DNA non-specifically. Could be a regulatory factor involved in maltose metabolism. This is Sugar fermentation stimulation protein A from Escherichia coli O7:K1 (strain IAI39 / ExPEC).